The chain runs to 118 residues: Small ribosomal subunit protein uS13 (118 aa).

The interval Gly94 to Lys118 is disordered.

Belongs to the universal ribosomal protein uS13 family. Part of the 30S ribosomal subunit. Forms a loose heterodimer with protein S19. Forms two bridges to the 50S subunit in the 70S ribosome.

Located at the top of the head of the 30S subunit, it contacts several helices of the 16S rRNA. In the 70S ribosome it contacts the 23S rRNA (bridge B1a) and protein L5 of the 50S subunit (bridge B1b), connecting the 2 subunits; these bridges are implicated in subunit movement. Contacts the tRNAs in the A and P-sites. This chain is Small ribosomal subunit protein uS13, found in Marinobacter nauticus (strain ATCC 700491 / DSM 11845 / VT8) (Marinobacter aquaeolei).